The chain runs to 38 residues: Glutathione S-transferase 2 (38 aa).

The protein belongs to the GST superfamily. Phi family.

The catalysed reaction is RX + glutathione = an S-substituted glutathione + a halide anion + H(+). In terms of biological role, conjugation of reduced glutathione to a wide number of exogenous and endogenous hydrophobic electrophiles. In plants, may have a detoxification role against certain herbicides. This chain is Glutathione S-transferase 2, found in Populus euphratica (Euphrates poplar).